Here is a 232-residue protein sequence, read N- to C-terminus: MPGWFKKVWYGLASLLSFSSFLLIIVALSLPHWLSGKILCQTGVDLVNATDPELVKFIGDIYYGLFRGCKVRQCGLGGRQSQFTIFPHLVKELNAGLHVTILLLLFLALALALVSMGFAILNIIQVPYRAVNGPGGICLWNVLAGGVVALAIGSFMAAVKFHDLTERIANFQERLFQFVVVEEQYEESFWICVASASAHAANLVVVAISQIPLPEIKTKMEEATVTPEDILY.

Transmembrane regions (helical) follow at residues 8-28 (VWYG…IVAL), 101-121 (ILLL…FAIL), 139-159 (LWNV…MAAV), and 188-208 (SFWI…VVAI).

The protein belongs to the clarin family. In terms of tissue distribution, detected in inner ear, particularly in hair bundles of auditory hair cells and is enriched in apical stereocilia. Detected in eye, but not in brain or muscle.

The protein localises to the cell projection. It is found in the stereocilium membrane. Plays a key role to hearing function. Required for normal organization and maintenance of the stereocilia bundle and for mechano-electrical transduction. The sequence is that of Clarin-2 from Mus musculus (Mouse).